The chain runs to 180 residues: Large ribosomal subunit protein uL5 (180 aa).

The protein belongs to the universal ribosomal protein uL5 family. In terms of assembly, part of the 50S ribosomal subunit; part of the 5S rRNA/L5/L18/L25 subcomplex. Contacts the 5S rRNA and the P site tRNA. Forms a bridge to the 30S subunit in the 70S ribosome.

Functionally, this is one of the proteins that bind and probably mediate the attachment of the 5S RNA into the large ribosomal subunit, where it forms part of the central protuberance. In the 70S ribosome it contacts protein S13 of the 30S subunit (bridge B1b), connecting the 2 subunits; this bridge is implicated in subunit movement. Contacts the P site tRNA; the 5S rRNA and some of its associated proteins might help stabilize positioning of ribosome-bound tRNAs. The sequence is that of Large ribosomal subunit protein uL5 from Ralstonia pickettii (strain 12J).